The following is a 231-amino-acid chain: L-ribulose-5-phosphate 4-epimerase SgbE (231 aa).

Substrate-binding positions include 27-28 (GN), 44-45 (SG), and 74-75 (SS). Residues aspartate 76, histidine 95, and histidine 97 each coordinate Zn(2+). The active-site Proton donor/acceptor is aspartate 120. Histidine 171 serves as a coordination point for Zn(2+). Catalysis depends on tyrosine 229, which acts as the Proton donor/acceptor.

It belongs to the aldolase class II family. AraD/FucA subfamily. It depends on Zn(2+) as a cofactor.

It catalyses the reaction L-ribulose 5-phosphate = D-xylulose 5-phosphate. Functionally, catalyzes the interconversion of L-ribulose 5-phosphate (LRu5P) and D-xylulose 5-phosphate (D-Xu5P) via a retroaldol/aldol mechanism (carbon-carbon bond cleavage analogous to a class II aldolase reaction). May be involved in the utilization of 2,3-diketo-L-gulonate. The protein is L-ribulose-5-phosphate 4-epimerase SgbE of Haemophilus influenzae (strain ATCC 51907 / DSM 11121 / KW20 / Rd).